The chain runs to 226 residues: Glutathione peroxidase 3 (226 aa).

A signal peptide spans 1 to 24 (MARLFRASCLLSLLLAGFIPPSQG). Sec73 is a catalytic residue. A non-standard amino acid (selenocysteine) is located at residue Sec73.

The protein belongs to the glutathione peroxidase family. Homotetramer. As to expression, secreted in plasma.

It is found in the secreted. It catalyses the reaction 2 glutathione + H2O2 = glutathione disulfide + 2 H2O. It carries out the reaction tert-butyl hydroperoxide + 2 glutathione = tert-butanol + glutathione disulfide + H2O. Its function is as follows. Protects cells and enzymes from oxidative damage, by catalyzing the reduction of hydrogen peroxide, lipid peroxides and organic hydroperoxide, by glutathione. This chain is Glutathione peroxidase 3, found in Bos taurus (Bovine).